We begin with the raw amino-acid sequence, 550 residues long: Hydroxylamine reductase (550 aa).

Residues Cys-3, Cys-6, Cys-18, and Cys-25 each coordinate [2Fe-2S] cluster. The hybrid [4Fe-2O-2S] cluster site is built by His-249, Glu-273, Cys-317, Cys-405, Cys-433, Cys-458, Glu-492, and Lys-494. Cys-405 bears the Cysteine persulfide mark.

Belongs to the HCP family. [2Fe-2S] cluster is required as a cofactor. Hybrid [4Fe-2O-2S] cluster serves as cofactor.

Its subcellular location is the cytoplasm. The catalysed reaction is A + NH4(+) + H2O = hydroxylamine + AH2 + H(+). In terms of biological role, catalyzes the reduction of hydroxylamine to form NH(3) and H(2)O. The protein is Hydroxylamine reductase of Enterobacter sp. (strain 638).